Here is a 453-residue protein sequence, read N- to C-terminus: CCA-adding enzyme (453 aa).

Serine 53 and lysine 56 together coordinate ATP. CTP contacts are provided by serine 53 and lysine 56. 3 residues coordinate Mg(2+): aspartate 65, aspartate 67, and aspartate 119. ATP contacts are provided by histidine 142, lysine 161, and tyrosine 170. CTP contacts are provided by histidine 142, lysine 161, and tyrosine 170.

This sequence belongs to the tRNA nucleotidyltransferase/poly(A) polymerase family. Archaeal CCA-adding enzyme subfamily. Homodimer. It depends on Mg(2+) as a cofactor.

It catalyses the reaction a tRNA precursor + 2 CTP + ATP = a tRNA with a 3' CCA end + 3 diphosphate. It carries out the reaction a tRNA with a 3' CCA end + 2 CTP + ATP = a tRNA with a 3' CCACCA end + 3 diphosphate. Catalyzes the addition and repair of the essential 3'-terminal CCA sequence in tRNAs without using a nucleic acid template. Adds these three nucleotides in the order of C, C, and A to the tRNA nucleotide-73, using CTP and ATP as substrates and producing inorganic pyrophosphate. tRNA 3'-terminal CCA addition is required both for tRNA processing and repair. Also involved in tRNA surveillance by mediating tandem CCA addition to generate a CCACCA at the 3' terminus of unstable tRNAs. While stable tRNAs receive only 3'-terminal CCA, unstable tRNAs are marked with CCACCA and rapidly degraded. This is CCA-adding enzyme from Pyrococcus furiosus (strain ATCC 43587 / DSM 3638 / JCM 8422 / Vc1).